The sequence spans 147 residues: Small ribosomal subunit protein eS19 (147 aa).

It belongs to the eukaryotic ribosomal protein eS19 family. In terms of assembly, component of the small ribosomal subunit.

It localises to the cytoplasm. Its subcellular location is the nucleus. Its function is as follows. Component of the small ribosomal subunit. The ribosome is a large ribonucleoprotein complex responsible for the synthesis of proteins in the cell. Required for pre-rRNA processing and maturation of 40S ribosomal subunits. The protein is Small ribosomal subunit protein eS19 (rps19) of Ictalurus punctatus (Channel catfish).